The following is a 178-amino-acid chain: Cell division protein SepF (178 aa).

The span at 19-45 shows a compositional bias: basic and acidic residues; sequence EHYESEHHTPHKDEDDSMEHDREERRA. The tract at residues 19–65 is disordered; it reads EHYESEHHTPHKDEDDSMEHDREERRAPAPVREIARETPTPHAAEEE.

Belongs to the SepF family. As to quaternary structure, homodimer. Interacts with FtsZ.

Its subcellular location is the cytoplasm. In terms of biological role, cell division protein that is part of the divisome complex and is recruited early to the Z-ring. Probably stimulates Z-ring formation, perhaps through the cross-linking of FtsZ protofilaments. Its function overlaps with FtsA. This Arthrobacter sp. (strain FB24) protein is Cell division protein SepF.